The chain runs to 497 residues: Probable malate:quinone oxidoreductase (497 aa).

Belongs to the MQO family. It depends on FAD as a cofactor.

It catalyses the reaction (S)-malate + a quinone = a quinol + oxaloacetate. The protein operates within carbohydrate metabolism; tricarboxylic acid cycle; oxaloacetate from (S)-malate (quinone route): step 1/1. The chain is Probable malate:quinone oxidoreductase from Prochlorococcus marinus (strain MIT 9515).